Reading from the N-terminus, the 329-residue chain is GTP 3',8-cyclase (329 aa).

Residues Met1–Ala229 enclose the Radical SAM core domain. Arg8 provides a ligand contact to GTP. [4Fe-4S] cluster is bound by residues Cys15 and Cys19. Tyr21 contacts S-adenosyl-L-methionine. Cys22 contacts [4Fe-4S] cluster. Arg60 provides a ligand contact to GTP. Residue Gly64 coordinates S-adenosyl-L-methionine. Thr91 provides a ligand contact to GTP. Residue Ser115 participates in S-adenosyl-L-methionine binding. Lys155 is a binding site for GTP. Residue Met189 participates in S-adenosyl-L-methionine binding. Residues Cys252 and Cys255 each contribute to the [4Fe-4S] cluster site. Arg257–Arg259 lines the GTP pocket. Cys269 contacts [4Fe-4S] cluster.

This sequence belongs to the radical SAM superfamily. MoaA family. In terms of assembly, monomer and homodimer. Requires [4Fe-4S] cluster as cofactor.

The enzyme catalyses GTP + AH2 + S-adenosyl-L-methionine = (8S)-3',8-cyclo-7,8-dihydroguanosine 5'-triphosphate + 5'-deoxyadenosine + L-methionine + A + H(+). It participates in cofactor biosynthesis; molybdopterin biosynthesis. Catalyzes the cyclization of GTP to (8S)-3',8-cyclo-7,8-dihydroguanosine 5'-triphosphate. This Microcystis aeruginosa (strain NIES-843 / IAM M-2473) protein is GTP 3',8-cyclase.